We begin with the raw amino-acid sequence, 275 residues long: Axoneme-associated protein mst101(3) (275 aa).

12 tandem repeats follow at residues 64–79 (KKKC…EAAE), 80–95 (KKKC…EAAE), 96–111 (KKKC…EAAQ), 112–127 (KKKC…EAAE), 128–143 (KKKC…EAAE), 144–159 (RKKC…CEEA), 160–175 (AKKK…LQQK), 181–196 (KKEK…EEAA), 197–212 (KKKA…AEEV), 215–230 (KKKA…CAEA), 231–246 (KKKA…CEEA), and 249–264 (KKMC…CAEA). The 12 X 16 AA tandem repeats of [KRA]-K-[KEM]-[CKA]-[AEKD]-[EA]-[ALE]-[AMK]-[FKAML]-[KQA]-[EQKA]-[KQCEM]-[ECLA]-[AEQ]-[AEQ]-[EQAKV] stretch occupies residues 64-264 (KKKCAEAAKK…AALQKKCAEA (201 aa)).

Testis.

It is found in the cytoplasm. Its function is as follows. Possible structural role in the sperm tail. The protein is Axoneme-associated protein mst101(3) (mst101(3)) of Drosophila hydei (Fruit fly).